The following is a 355-amino-acid chain: Uroporphyrinogen decarboxylase (355 aa).

Substrate-binding positions include 36–40 (RQAGR), Asp-85, Tyr-160, Ser-215, and His-334.

The protein belongs to the uroporphyrinogen decarboxylase family. As to quaternary structure, homodimer.

Its subcellular location is the cytoplasm. The enzyme catalyses uroporphyrinogen III + 4 H(+) = coproporphyrinogen III + 4 CO2. The protein operates within porphyrin-containing compound metabolism; protoporphyrin-IX biosynthesis; coproporphyrinogen-III from 5-aminolevulinate: step 4/4. In terms of biological role, catalyzes the decarboxylation of four acetate groups of uroporphyrinogen-III to yield coproporphyrinogen-III. This Rhodococcus opacus (strain B4) protein is Uroporphyrinogen decarboxylase.